The primary structure comprises 505 residues: Maturase K (505 aa).

Belongs to the intron maturase 2 family. MatK subfamily.

It is found in the plastid. The protein resides in the chloroplast. Its function is as follows. Usually encoded in the trnK tRNA gene intron. Probably assists in splicing its own and other chloroplast group II introns. This Barclaya longifolia (Orchid lily) protein is Maturase K.